A 745-amino-acid polypeptide reads, in one-letter code: Exocyst complex component 3 (745 aa).

Position 28 is an N6-acetyllysine (Lys-28).

The protein belongs to the SEC6 family. In terms of assembly, the exocyst complex is composed of EXOC1, EXOC2, EXOC3, EXOC4, EXOC5, EXOC6, EXOC7 and EXOC8. Interacts with EXOC3L1. Interacts with BIRC6/bruce. Interacts with MYRIP. Interacts with SLC6A9.

It localises to the cytoplasm. Its subcellular location is the perinuclear region. It is found in the cell projection. The protein localises to the growth cone. The protein resides in the neuron projection. It localises to the midbody. Its subcellular location is the golgi apparatus. In terms of biological role, component of the exocyst complex involved in the docking of exocytic vesicles with fusion sites on the plasma membrane. The polypeptide is Exocyst complex component 3 (EXOC3) (Bos taurus (Bovine)).